Consider the following 469-residue polypeptide: Acetyl-CoA decarbonylase/synthase complex subunit beta 1 (469 aa).

[Ni-Fe-S] cluster contacts are provided by Cys-189, Cys-192, Cys-278, and Cys-280.

The protein belongs to the CdhC family. As to quaternary structure, monomer. The ACDS complex is made up of alpha, epsilon, beta, gamma and delta chains with a probable stoichiometry of (alpha(2)epsilon(2))(4)-beta(8)-(gamma(1)delta(1))(8) (Potential). The cofactor is [Ni-Fe-S] cluster.

It carries out the reaction Co(I)-[corrinoid Fe-S protein] + acetyl-CoA + H(+) = methyl-Co(III)-[corrinoid Fe-S protein] + CO + CoA. The protein operates within one-carbon metabolism; methanogenesis from acetate. Its function is as follows. Part of a complex that catalyzes the reversible cleavage of acetyl-CoA, allowing growth on acetate as sole source of carbon and energy. The alpha-epsilon complex generates CO from CO(2), while the beta subunit (this protein) combines the CO with CoA and a methyl group to form acetyl-CoA. The methyl group, which is incorporated into acetyl-CoA, is transferred to the beta subunit by a corrinoid iron-sulfur protein (the gamma-delta complex). This chain is Acetyl-CoA decarbonylase/synthase complex subunit beta 1 (cdhC1), found in Methanosarcina mazei (strain ATCC BAA-159 / DSM 3647 / Goe1 / Go1 / JCM 11833 / OCM 88) (Methanosarcina frisia).